The following is a 543-amino-acid chain: Cytochrome P450 2U1 (543 aa).

The next 4 helical transmembrane spans lie at 32 to 52 (PTGG…SWLW), 58 to 78 (GIPP…VLLP), 261 to 281 (VCLN…YLPF), and 342 to 362 (LFYI…NSLL). C490 serves as a coordination point for heme. The helical transmembrane segment at 495 to 515 (LAKMELFLMFVSLMQSFTFVL) threads the bilayer.

The protein belongs to the cytochrome P450 family. The cofactor is heme.

It localises to the endoplasmic reticulum membrane. It is found in the microsome membrane. Its subcellular location is the mitochondrion inner membrane. It catalyses the reaction an omega-methyl-long-chain fatty acid + reduced [NADPH--hemoprotein reductase] + O2 = an omega-hydroxy-long-chain fatty acid + oxidized [NADPH--hemoprotein reductase] + H2O + H(+). The catalysed reaction is (5Z,8Z,11Z,14Z)-eicosatetraenoate + reduced [NADPH--hemoprotein reductase] + O2 = 19-hydroxy-(5Z,8Z,11Z,14Z)-eicosatetraenoate + oxidized [NADPH--hemoprotein reductase] + H2O + H(+). It carries out the reaction (5Z,8Z,11Z,14Z)-eicosatetraenoate + reduced [NADPH--hemoprotein reductase] + O2 = 20-hydroxy-(5Z,8Z,11Z,14Z)-eicosatetraenoate + oxidized [NADPH--hemoprotein reductase] + H2O + H(+). The enzyme catalyses N-[(5Z,8Z,11Z,14Z)-eicosatetraenoyl]-serotonin + reduced [NADPH--hemoprotein reductase] + O2 = 2-oxo-N-[(5Z,8Z,11Z,14Z)-eicosatetraenoyl]-serotonin + oxidized [NADPH--hemoprotein reductase] + H2O + H(+). In terms of biological role, a cytochrome P450 monooxygenase involved in the metabolism of arachidonic acid and its conjugates. Mechanistically, uses molecular oxygen inserting one oxygen atom into a substrate, and reducing the second into a water molecule, with two electrons provided by NADPH via cytochrome P450 reductase (CPR; NADPH-ferrihemoprotein reductase). Acts as an omega and omega-1 hydroxylase for arachidonic acid and possibly for other long chain fatty acids. May modulate the arachidonic acid signaling pathway and play a role in other fatty acid signaling processes. May down-regulate the biological activities of N-arachidonoyl-serotonin, an endocannabinoid that has anti-nociceptive effects through inhibition of fatty acid amide hydrolase FAAH, TRPV1 receptor and T-type calcium channels. Catalyzes C-2 oxidation of the indole ring of N-arachidonoyl-serotonin forming a less active product 2-oxo-N-arachidonoyl-serotonin. This Bos taurus (Bovine) protein is Cytochrome P450 2U1 (CYP2U1).